The chain runs to 434 residues: MVVKFTKSEALHKEALEHIVGGVNSPSRSFKAVGGGAPVAMERGKGAYFWDVDGNKYIDYLAAYGPIITGHAHPHITKAITTAAENGVLYGTPTALEVKFAKMLKEAMPALDKVRFVNSGTEAVMTTIRVARAYTGRTKIMKFAGCYHGHSDLVLVAAGSGPSTLGTPDSAGVPQSIAQEVITVPFNNVETLKEALDKWGHEVAAILVEPIVGNFGIVEPKPGFLEKVNELVHEAGALVIYDEVITAFRFMYGGAQDLLGVTPDLTALGKVIGGGLPIGAYGGKKEIMEQVAPLGPAYQAGTMAGNPASMASGIACLEVLQQEGLYEKLDELGAMLEKGILEQAAKHNIDITLNRLKGALTVYFTTNTIEDYDAAQDTDGEMFGKFFKLMLQEGVNLAPSKYEAWFLTTEHTKEDIEYTIEAVGRAFAALADSK.

An N6-(pyridoxal phosphate)lysine modification is found at Lys-270.

It belongs to the class-III pyridoxal-phosphate-dependent aminotransferase family. HemL subfamily. As to quaternary structure, homodimer. The cofactor is pyridoxal 5'-phosphate.

Its subcellular location is the cytoplasm. It catalyses the reaction (S)-4-amino-5-oxopentanoate = 5-aminolevulinate. The protein operates within porphyrin-containing compound metabolism; protoporphyrin-IX biosynthesis; 5-aminolevulinate from L-glutamyl-tRNA(Glu): step 2/2. The sequence is that of Glutamate-1-semialdehyde 2,1-aminomutase 2 from Bacillus cereus (strain G9842).